A 386-amino-acid chain; its full sequence is ATP phosphoribosyltransferase regulatory subunit (386 aa).

It belongs to the class-II aminoacyl-tRNA synthetase family. HisZ subfamily. As to quaternary structure, heteromultimer composed of HisG and HisZ subunits.

The protein resides in the cytoplasm. Its pathway is amino-acid biosynthesis; L-histidine biosynthesis; L-histidine from 5-phospho-alpha-D-ribose 1-diphosphate: step 1/9. Functionally, required for the first step of histidine biosynthesis. May allow the feedback regulation of ATP phosphoribosyltransferase activity by histidine. The protein is ATP phosphoribosyltransferase regulatory subunit of Ralstonia nicotianae (strain ATCC BAA-1114 / GMI1000) (Ralstonia solanacearum).